A 381-amino-acid chain; its full sequence is Lysophosphatidylserine lipase ABHD12 (381 aa).

The Cytoplasmic portion of the chain corresponds to 1 to 58 (MRKRNESVTVEHERAAAAPAPLDKGCSLRHSLRLPAADTGMKRPLGRRHGLWFRLRRL). The chain crosses the membrane as a helical span at residues 59 to 79 (IIWLLGVYIAIPFLVKLCPAI). Residues 80–381 (QAKLVFLNFV…LGIPEHEHHH (302 aa)) are Extracellular-facing. A glycan (N-linked (GlcNAc...) asparagine) is linked at N106. S229 functions as the Nucleophile in the catalytic mechanism. Catalysis depends on charge relay system residues D316 and H355.

It belongs to the serine esterase family.

It is found in the endoplasmic reticulum membrane. It carries out the reaction 1-(9Z-octadecenoyl)-sn-glycero-3-phospho-L-serine + H2O = sn-glycero-3-phospho-L-serine + (9Z)-octadecenoate + H(+). The enzyme catalyses 1-(9Z-octadecenoyl)-sn-glycero-3-phospho-(1'-sn-glycerol) + H2O = sn-glycero-3-phospho-(1'-sn-glycerol) + (9Z)-octadecenoate + H(+). It catalyses the reaction 1-(9Z-octadecenoyl)-sn-glycero-3-phospho-(1D-myo-inositol) + H2O = sn-glycero-3-phospho-1D-myo-inositol + (9Z)-octadecenoate + H(+). The catalysed reaction is 1-(9Z-octadecenoyl)-sn-glycero-3-phosphoethanolamine + H2O = sn-glycero-3-phosphoethanolamine + (9Z)-octadecenoate + H(+). It carries out the reaction 1-(9Z-octadecenoyl)-sn-glycero-3-phosphocholine + H2O = 1-(9Z-octadecenoyl)-sn-glycerol + phosphocholine + H(+). The enzyme catalyses 2-(9Z-octadecenoyl)-glycerol + H2O = glycerol + (9Z)-octadecenoate + H(+). It catalyses the reaction 1-hexadecanoyl-sn-glycero-3-phospho-L-serine + H2O = sn-glycero-3-phospho-L-serine + hexadecanoate + H(+). The catalysed reaction is 2-(5Z,8Z,11Z,14Z-eicosatetraenoyl)-glycerol + H2O = glycerol + (5Z,8Z,11Z,14Z)-eicosatetraenoate + H(+). It carries out the reaction Hydrolyzes glycerol monoesters of long-chain fatty acids.. The enzyme catalyses 1-decanoylglycerol + H2O = decanoate + glycerol + H(+). It catalyses the reaction 1-dodecanoylglycerol + H2O = dodecanoate + glycerol + H(+). The catalysed reaction is 1-tetradecanoylglycerol + H2O = tetradecanoate + glycerol + H(+). It carries out the reaction 2-hexadecanoylglycerol + H2O = glycerol + hexadecanoate + H(+). The enzyme catalyses 1-(9Z-octadecenoyl)-glycerol + H2O = glycerol + (9Z)-octadecenoate + H(+). It catalyses the reaction 2-(9Z,12Z-octadecadienoyl)-glycerol + H2O = (9Z,12Z)-octadecadienoate + glycerol + H(+). The catalysed reaction is 1-(5Z,8Z,11Z,14Z-eicosatetraenoyl)-glycerol + H2O = glycerol + (5Z,8Z,11Z,14Z)-eicosatetraenoate + H(+). It carries out the reaction 1-(9Z,12Z-octadecadienoyl)-glycerol + H2O = (9Z,12Z)-octadecadienoate + glycerol + H(+). The enzyme catalyses 1-hexadecanoylglycerol + H2O = glycerol + hexadecanoate + H(+). It catalyses the reaction 1-octadecanoylglycerol + H2O = octadecanoate + glycerol + H(+). The catalysed reaction is 1-octadecanoyl-2-(9,10-epoxyoctadecanoyl)-sn-glycero-3-phospho-L-serine + H2O = 9,10-epoxyoctadecanoate + 1-octadecanoyl-sn-glycero-3-phosphoserine + H(+). It carries out the reaction 1-octadecanoyl-2-(10-hydroxyoctadecanoyl)-sn-glycero-3-phospho-L-serine + H2O = 1-octadecanoyl-sn-glycero-3-phosphoserine + 10-hydroxyoctadecanoate + H(+). The enzyme catalyses 1-hexadecanoyl-2-(10-hydroxyoctadecanoyl)-sn-glycero-3-phospho-L-serine + H2O = 10-hydroxyoctadecanoate + 1-hexadecanoyl-sn-glycero-3-phospho-L-serine + H(+). Functionally, lysophosphatidylserine (LPS) lipase that mediates the hydrolysis of lysophosphatidylserine, a class of signaling lipids that regulates immunological and neurological processes. Represents a major lysophosphatidylserine lipase in the brain, thereby playing a key role in the central nervous system. Also able to hydrolyze oxidized phosphatidylserine; oxidized phosphatidylserine is produced in response to severe inflammatory stress and constitutes a proapoptotic 'eat me' signal. Also has monoacylglycerol (MAG) lipase activity: hydrolyzes 2-arachidonoylglycerol (2-AG), thereby acting as a regulator of endocannabinoid signaling pathways. Has a strong preference for very-long-chain lipid substrates; substrate specificity is likely due to improved catalysis and not improved substrate binding. This Gallus gallus (Chicken) protein is Lysophosphatidylserine lipase ABHD12.